Reading from the N-terminus, the 549-residue chain is Oxygen-dependent choline dehydrogenase (549 aa).

4 to 33 is an FAD binding site; it reads DFVIIGSGSAGSALAYRLSEDGKNSVLVIE. Residue H465 is the Proton acceptor of the active site.

The protein belongs to the GMC oxidoreductase family. The cofactor is FAD.

The catalysed reaction is choline + A = betaine aldehyde + AH2. The enzyme catalyses betaine aldehyde + NAD(+) + H2O = glycine betaine + NADH + 2 H(+). It participates in amine and polyamine biosynthesis; betaine biosynthesis via choline pathway; betaine aldehyde from choline (cytochrome c reductase route): step 1/1. In terms of biological role, involved in the biosynthesis of the osmoprotectant glycine betaine. Catalyzes the oxidation of choline to betaine aldehyde and betaine aldehyde to glycine betaine at the same rate. The chain is Oxygen-dependent choline dehydrogenase from Rhizobium etli (strain CIAT 652).